The chain runs to 238 residues: Ribonuclease PH (238 aa).

Residues Arg86 and 124–126 contribute to the phosphate site; that span reads GTR.

This sequence belongs to the RNase PH family. As to quaternary structure, homohexameric ring arranged as a trimer of dimers.

The catalysed reaction is tRNA(n+1) + phosphate = tRNA(n) + a ribonucleoside 5'-diphosphate. Its function is as follows. Phosphorolytic 3'-5' exoribonuclease that plays an important role in tRNA 3'-end maturation. Removes nucleotide residues following the 3'-CCA terminus of tRNAs; can also add nucleotides to the ends of RNA molecules by using nucleoside diphosphates as substrates, but this may not be physiologically important. Probably plays a role in initiation of 16S rRNA degradation (leading to ribosome degradation) during starvation. The chain is Ribonuclease PH from Brucella melitensis biotype 2 (strain ATCC 23457).